Reading from the N-terminus, the 95-residue chain is Aspartyl/glutamyl-tRNA(Asn/Gln) amidotransferase subunit C (95 aa).

This sequence belongs to the GatC family. In terms of assembly, heterotrimer of A, B and C subunits.

It carries out the reaction L-glutamyl-tRNA(Gln) + L-glutamine + ATP + H2O = L-glutaminyl-tRNA(Gln) + L-glutamate + ADP + phosphate + H(+). The enzyme catalyses L-aspartyl-tRNA(Asn) + L-glutamine + ATP + H2O = L-asparaginyl-tRNA(Asn) + L-glutamate + ADP + phosphate + 2 H(+). In terms of biological role, allows the formation of correctly charged Asn-tRNA(Asn) or Gln-tRNA(Gln) through the transamidation of misacylated Asp-tRNA(Asn) or Glu-tRNA(Gln) in organisms which lack either or both of asparaginyl-tRNA or glutaminyl-tRNA synthetases. The reaction takes place in the presence of glutamine and ATP through an activated phospho-Asp-tRNA(Asn) or phospho-Glu-tRNA(Gln). This is Aspartyl/glutamyl-tRNA(Asn/Gln) amidotransferase subunit C from Brucella abortus (strain S19).